A 558-amino-acid polypeptide reads, in one-letter code: Aurovertin biosynthesis cluster transcription factor aurF (558 aa).

Belongs to the POU transcription factor family. Class-3 subfamily.

Its subcellular location is the nucleus. Transcription factor that regulates the expression of the gene cluster that mediates the biosynthesis of aurovertins, fungal polyketides that exhibit potent inhibition of adenosine triphosphate synthase. This chain is Aurovertin biosynthesis cluster transcription factor aurF, found in Calcarisporium arbuscula (Dendryphion arbuscula).